The sequence spans 308 residues: Ribosomal RNA small subunit methyltransferase H (308 aa).

Residues 36-38, Asp-55, Phe-86, Asp-103, and Gln-110 each bind S-adenosyl-L-methionine; that span reads GGH.

This sequence belongs to the methyltransferase superfamily. RsmH family.

It localises to the cytoplasm. The catalysed reaction is cytidine(1402) in 16S rRNA + S-adenosyl-L-methionine = N(4)-methylcytidine(1402) in 16S rRNA + S-adenosyl-L-homocysteine + H(+). In terms of biological role, specifically methylates the N4 position of cytidine in position 1402 (C1402) of 16S rRNA. This is Ribosomal RNA small subunit methyltransferase H from Helicobacter pylori (strain Shi470).